We begin with the raw amino-acid sequence, 77 residues long: Small nuclear ribonucleoprotein G (77 aa).

The Sm domain occupies 2 to 77 (VSTPELKKYM…IISLEALDAI (76 aa)).

This sequence belongs to the snRNP Sm proteins family. Component of the Sm core complex, present in spliceosomal snRNP U1, U2, U4/U6 and U5. The core complex contains SMB1, SMD1, SMD2, SMD3, SME1, SMX3 and SMX2 (Sm proteins B, D1, D2, D3, E, F and G, respectively), and is probably a heptameric ring structure. SMX2 specifically interacts with SME1. Belongs to the CWC complex (or CEF1-associated complex), a spliceosome sub-complex reminiscent of a late-stage spliceosome composed of the U2, U5 and U6 snRNAs and at least BUD13, BUD31, BRR2, CDC40, CEF1, CLF1, CUS1, CWC2, CWC15, CWC21, CWC22, CWC23, CWC24, CWC25, CWC27, ECM2, HSH155, IST3, ISY1, LEA1, MSL1, NTC20, PRP8, PRP9, PRP11, PRP19, PRP21, PRP22, PRP45, PRP46, SLU7, SMB1, SMD1, SMD2, SMD3, SMX2, SMX3, SNT309, SNU114, SPP2, SYF1, SYF2, RSE1 and YJU2. Component of the U4/U6-U5 tri-snRNP complex composed of the U4, U6 and U5 snRNAs and at least PRP3, PRP4, PRP6, PRP8, PRP18, PRP31, PRP38, SNU13, SNU23, SNU66, SNU114, SPP381, SMB1, SMD1, SMD2, SMD3, SMX2, SMX3, LSM2, LSM3, LSM4, LSM5, LSM6, LSM7, LSM8, BRR2 and DIB1.

It localises to the nucleus. The protein localises to the cytoplasm. Its function is as follows. Plays a role in pre-mRNA splicing as a core component of the spliceosomal U1, U2, U4 and U5 small nuclear ribonucleoproteins (snRNPs), the building blocks of the spliceosome. The polypeptide is Small nuclear ribonucleoprotein G (SMX2) (Saccharomyces cerevisiae (strain ATCC 204508 / S288c) (Baker's yeast)).